The chain runs to 480 residues: MANVQSRYNHLFPSPAAAFSGMYTGGLWTNNLGSWPGKANQTVEFSNGTKMTVETTASVMLDRGLDFSSGESLFQTACMPNKKSRPPDPRPSLAVGKPPYSIPLGGPSMYPDPIIHHKKDFVRGYYLHEERLEDVAVLQLPTFRLIGESPVSLARVAVQFLERARKDGKEKLIIDLSNNMGGDINLGFNLFRILFPDKPIYTATRFPSTELIGLMGRVFSTSQGNEAVEHDNTLDLPLVFQNAVTPDHRHSFGSWEKLFGPVEIAGQNMSHLHATYNFTTASTEDNPISGYGGIEFGPSTQLFHAENIIIMTNGICASTCTILARLLKQQGVRSIVFGGRPRAAPMQLLGGSKGGQYWSLVTISHYIKKAREIAVNASGAGSPILSEDELARFLELAPPPLTGFPIRIDSRGGSGVNFRNEYDEKDPTTPLQFVYEAADCRLFWTAENYVFPESSWVAAADAMFGDASCVEESDGHHITP.

The segment at 78–97 (CMPNKKSRPPDPRPSLAVGK) is disordered. The interval 134 to 336 (DVAVLQLPTF…LKQQGVRSIV (203 aa)) is peptidase S41 domain.

Belongs to the peptidase S41A family.

The protein operates within mycotoxin biosynthesis. Peptidase S41 family protein; part of the gene cluster that mediates the biosynthesis of the secondary metabolite ustiloxin B, an antimitotic tetrapeptide. First, ustA is processed by the subtilisin-like endoprotease Kex2 that is outside the ustiloxin B gene cluster, at the C-terminal side of Arg-Lys, after transfer to Golgi apparatus through the endoplasmic reticulum (ER). Cleavage by KEX2 generates 16 peptides YAIG-I to YAIG-XVI. To process the precursor peptide further, at least two peptidases are necessary to cleave the N-terminal and C-terminal sides of the Tyr-Ala-Ile-Gly core peptide which serves as backbone for the synthesis of ustiloxin B, through cyclization and modification of the tyrosine with a non-protein coding amino acid, norvaline. One of the two peptidases must be the serine peptidase ustP; and the other pepdidase is probably ustH. Macrocyclization of the core peptide derived from ustA requires the tyrosinase ustQ, as well as the homologous oxidases ustYa and ustYb, and leads to the production of the first cyclization product N-desmethylustiloxin F. For the formation of N-desmethylustiloxin F, three oxidation steps are required, hydroxylation at the benzylic position, hydroxylation at either the aromatic ring of Tyr or beta-position of Ile, and oxidative cyclization. UstQ may catalyze the oxidation of a phenol moiety, whereas the ustYa and ustYb are most likely responsible for the remaining two-step oxidations. N-desmethylustiloxin F is then methylated by ustM to yield ustiloxin F which in turn substrate of the cytochrome P450 monooxygenase ustC which catalyzes the formation of S-deoxyustiloxin H. The flavoprotein monooxygenases ustF1 and ustF2 then participate in the modification of the side chain of S-deoxyustiloxin H, leading to the synthesis of an oxime intermediate, via ustiloxin H. Finally, carboxylative dehydration performed by the cysteine desulfurase-like protein ustD yields ustiloxin B. The polypeptide is Peptidase S41 family protein ustP (Aspergillus flavus (strain ATCC 200026 / FGSC A1120 / IAM 13836 / NRRL 3357 / JCM 12722 / SRRC 167)).